The following is an 84-amino-acid chain: uncharacterized protein (84 aa).

The next 3 helical transmembrane spans lie at 4 to 20, 27 to 49, and 59 to 81; these read AYVL…IKYG, VWKA…WIAF, and IGLA…VYVL.

It is found in the cell membrane. This is an uncharacterized protein from Archaeoglobus fulgidus (strain ATCC 49558 / DSM 4304 / JCM 9628 / NBRC 100126 / VC-16).